Reading from the N-terminus, the 316-residue chain is 4-hydroxy-3-methylbut-2-enyl diphosphate reductase (316 aa).

A [4Fe-4S] cluster-binding site is contributed by cysteine 12. Positions 41 and 74 each coordinate (2E)-4-hydroxy-3-methylbut-2-enyl diphosphate. Positions 41 and 74 each coordinate dimethylallyl diphosphate. Residues histidine 41 and histidine 74 each contribute to the isopentenyl diphosphate site. Cysteine 96 provides a ligand contact to [4Fe-4S] cluster. (2E)-4-hydroxy-3-methylbut-2-enyl diphosphate is bound at residue histidine 124. Position 124 (histidine 124) interacts with dimethylallyl diphosphate. An isopentenyl diphosphate-binding site is contributed by histidine 124. Glutamate 126 acts as the Proton donor in catalysis. Threonine 165 is a (2E)-4-hydroxy-3-methylbut-2-enyl diphosphate binding site. Residue cysteine 195 participates in [4Fe-4S] cluster binding. The (2E)-4-hydroxy-3-methylbut-2-enyl diphosphate site is built by serine 223, serine 224, asparagine 225, and serine 267. Residues serine 223, serine 224, asparagine 225, and serine 267 each contribute to the dimethylallyl diphosphate site. Isopentenyl diphosphate contacts are provided by serine 223, serine 224, asparagine 225, and serine 267.

Belongs to the IspH family. It depends on [4Fe-4S] cluster as a cofactor.

The catalysed reaction is isopentenyl diphosphate + 2 oxidized [2Fe-2S]-[ferredoxin] + H2O = (2E)-4-hydroxy-3-methylbut-2-enyl diphosphate + 2 reduced [2Fe-2S]-[ferredoxin] + 2 H(+). It carries out the reaction dimethylallyl diphosphate + 2 oxidized [2Fe-2S]-[ferredoxin] + H2O = (2E)-4-hydroxy-3-methylbut-2-enyl diphosphate + 2 reduced [2Fe-2S]-[ferredoxin] + 2 H(+). The protein operates within isoprenoid biosynthesis; dimethylallyl diphosphate biosynthesis; dimethylallyl diphosphate from (2E)-4-hydroxy-3-methylbutenyl diphosphate: step 1/1. It functions in the pathway isoprenoid biosynthesis; isopentenyl diphosphate biosynthesis via DXP pathway; isopentenyl diphosphate from 1-deoxy-D-xylulose 5-phosphate: step 6/6. In terms of biological role, catalyzes the conversion of 1-hydroxy-2-methyl-2-(E)-butenyl 4-diphosphate (HMBPP) into a mixture of isopentenyl diphosphate (IPP) and dimethylallyl diphosphate (DMAPP). Acts in the terminal step of the DOXP/MEP pathway for isoprenoid precursor biosynthesis. This Acidithiobacillus ferrooxidans (strain ATCC 53993 / BNL-5-31) (Leptospirillum ferrooxidans (ATCC 53993)) protein is 4-hydroxy-3-methylbut-2-enyl diphosphate reductase.